A 224-amino-acid polypeptide reads, in one-letter code: Extracellular protease inhibitor 10 (224 aa).

A signal peptide spans 1–22 (MKSAFTLSLALVAVTATISAAA). 3 consecutive Kazal-like domains span residues 23–72 (DDNC…ECAS), 90–127 (TSGT…AKCK), and 156–210 (GYQG…PCPS). An N-linked (GlcNAc...) asparagine glycan is attached at Asn25. 3 cysteine pairs are disulfide-bonded: Cys26–Cys56, Cys30–Cys49, and Cys38–Cys70. The disordered stretch occupies residues 69 to 92 (ECASTPASSATPSPVTSSTGSTSG). Low complexity predominate over residues 71–92 (ASTPASSATPSPVTSSTGSTSG). 5 disulfides stabilise this stretch: Cys96-Cys126, Cys100-Cys119, Cys162-Cys193, Cys167-Cys186, and Cys175-Cys208. Residue Asn199 is glycosylated (N-linked (GlcNAc...) asparagine). Residues 202–224 (MVGEGPCPSQEQQQQQQQQQQKL) form a disordered region. The segment covering 211–224 (QEQQQQQQQQQQKL) has biased composition (low complexity).

In terms of assembly, interacts with host subtilisin-like protease P69B.

The protein resides in the secreted. Its function is as follows. Secreted effector that interacts with and inhibits the pathogenesis-related P69B subtilisin-like serine protease of host tomato. Inhibition of host proteases by a pathogen extracellular protease inhibitor forms a specific type of defense-counterdefense mechanism between plants and microbial pathogens. This is Extracellular protease inhibitor 10 from Phytophthora infestans (Potato late blight agent).